A 407-amino-acid chain; its full sequence is 1-deoxy-D-xylulose 5-phosphate reductoisomerase (407 aa).

The NADPH site is built by Thr25, Gly26, Ser27, Ile28, Asn53, and Asn136. Lys137 contributes to the 1-deoxy-D-xylulose 5-phosphate binding site. Position 138 (Glu138) interacts with NADPH. Asp162 contacts Mn(2+). Positions 163, 164, 188, and 211 each coordinate 1-deoxy-D-xylulose 5-phosphate. Glu164 contacts Mn(2+). Residue Gly217 participates in NADPH binding. 1-deoxy-D-xylulose 5-phosphate-binding residues include Ser224, Asn229, Lys230, and Glu233. Residue Glu233 participates in Mn(2+) binding.

It belongs to the DXR family. Mg(2+) is required as a cofactor. Requires Mn(2+) as cofactor.

The catalysed reaction is 2-C-methyl-D-erythritol 4-phosphate + NADP(+) = 1-deoxy-D-xylulose 5-phosphate + NADPH + H(+). Its pathway is isoprenoid biosynthesis; isopentenyl diphosphate biosynthesis via DXP pathway; isopentenyl diphosphate from 1-deoxy-D-xylulose 5-phosphate: step 1/6. In terms of biological role, catalyzes the NADPH-dependent rearrangement and reduction of 1-deoxy-D-xylulose-5-phosphate (DXP) to 2-C-methyl-D-erythritol 4-phosphate (MEP). This chain is 1-deoxy-D-xylulose 5-phosphate reductoisomerase, found in Rhodopseudomonas palustris (strain BisA53).